We begin with the raw amino-acid sequence, 150 residues long: Endoribonuclease YbeY (150 aa).

Positions 112, 116, and 122 each coordinate Zn(2+).

This sequence belongs to the endoribonuclease YbeY family. Zn(2+) serves as cofactor.

The protein resides in the cytoplasm. Its function is as follows. Single strand-specific metallo-endoribonuclease involved in late-stage 70S ribosome quality control and in maturation of the 3' terminus of the 16S rRNA. In Geobacter sulfurreducens (strain ATCC 51573 / DSM 12127 / PCA), this protein is Endoribonuclease YbeY.